Here is a 261-residue protein sequence, read N- to C-terminus: Protein TfpB (261 aa).

The sequence is that of Protein TfpB (tfpB) from Moraxella bovis.